The sequence spans 81 residues: 2,3-bisphosphoglycerate-independent phosphoglycerate mutase (81 aa).

Serine 14 (phosphoserine intermediate) is an active-site residue. Serine 14 serves as a coordination point for Mn(2+). Histidine 75 is a binding site for substrate.

It belongs to the BPG-independent phosphoglycerate mutase family. Monomer. The cofactor is Mn(2+).

It carries out the reaction (2R)-2-phosphoglycerate = (2R)-3-phosphoglycerate. It participates in carbohydrate degradation; glycolysis; pyruvate from D-glyceraldehyde 3-phosphate: step 3/5. Functionally, catalyzes the interconversion of 2-phosphoglycerate and 3-phosphoglycerate. In Tomato big bud phytoplasma, this protein is 2,3-bisphosphoglycerate-independent phosphoglycerate mutase (gpmI).